Consider the following 451-residue polypeptide: MQRNAVILAAGKGTRMKSNKYKVLHKVAGKSMVEHVLTNVKNAGVNQIVTIVGHGAEDVKETLGNQSLYSYQEEQLGTAHAVKMANEHLKEVEGTTLVVCGDTPLITAHTLQKLIEHHESTHAQATVLSATAQIPFGYGRIVRDEQRRLQRIVEEKDASEAQKALTEISSGIFAFDNRVLFSKLEEVKNDNAQGEYYLPDVISLILAENGVAEVYHTDDFNEIMGVNDRVMLSNAEKALQQRINIEHMRNGVTIIDPTTTFIGPDVKIGMDTIIEPGVRINGETVIGEEAVIGQYSEINNSHIGSQVDIKQSVINDSIVGDKTKVGPFAQLRPGSNLGSDVKVGNFVEVKKADLKDGAKVSHLSYIGDAEIGERTNIGCGSITVNYDGVNKFKTVVGKDAFIGCNTNLVAPVTVGDGVLIAAGSTITDNVPNESLALARARQITKEGYLKK.

The segment at 1-229 (MQRNAVILAA…FNEIMGVNDR (229 aa)) is pyrophosphorylase. UDP-N-acetyl-alpha-D-glucosamine is bound by residues 8 to 11 (LAAG), lysine 22, glutamine 72, and 77 to 78 (GT). Residue aspartate 102 coordinates Mg(2+). The UDP-N-acetyl-alpha-D-glucosamine site is built by glycine 139, glutamate 154, and asparagine 227. Position 227 (asparagine 227) interacts with Mg(2+). Residues 230-250 (VMLSNAEKALQQRINIEHMRN) are linker. An N-acetyltransferase region spans residues 251 to 451 (GVTIIDPTTT…QITKEGYLKK (201 aa)). 2 residues coordinate UDP-N-acetyl-alpha-D-glucosamine: arginine 332 and lysine 350. Histidine 362 (proton acceptor) is an active-site residue. UDP-N-acetyl-alpha-D-glucosamine contacts are provided by tyrosine 365 and asparagine 376. Acetyl-CoA-binding positions include 385-386 (NY), alanine 422, and arginine 439.

The protein in the N-terminal section; belongs to the N-acetylglucosamine-1-phosphate uridyltransferase family. In the C-terminal section; belongs to the transferase hexapeptide repeat family. Homotrimer. The cofactor is Mg(2+).

It is found in the cytoplasm. It catalyses the reaction alpha-D-glucosamine 1-phosphate + acetyl-CoA = N-acetyl-alpha-D-glucosamine 1-phosphate + CoA + H(+). It carries out the reaction N-acetyl-alpha-D-glucosamine 1-phosphate + UTP + H(+) = UDP-N-acetyl-alpha-D-glucosamine + diphosphate. The protein operates within nucleotide-sugar biosynthesis; UDP-N-acetyl-alpha-D-glucosamine biosynthesis; N-acetyl-alpha-D-glucosamine 1-phosphate from alpha-D-glucosamine 6-phosphate (route II): step 2/2. Its pathway is nucleotide-sugar biosynthesis; UDP-N-acetyl-alpha-D-glucosamine biosynthesis; UDP-N-acetyl-alpha-D-glucosamine from N-acetyl-alpha-D-glucosamine 1-phosphate: step 1/1. It participates in bacterial outer membrane biogenesis; LPS lipid A biosynthesis. Catalyzes the last two sequential reactions in the de novo biosynthetic pathway for UDP-N-acetylglucosamine (UDP-GlcNAc). The C-terminal domain catalyzes the transfer of acetyl group from acetyl coenzyme A to glucosamine-1-phosphate (GlcN-1-P) to produce N-acetylglucosamine-1-phosphate (GlcNAc-1-P), which is converted into UDP-GlcNAc by the transfer of uridine 5-monophosphate (from uridine 5-triphosphate), a reaction catalyzed by the N-terminal domain. In Staphylococcus haemolyticus (strain JCSC1435), this protein is Bifunctional protein GlmU.